A 468-amino-acid polypeptide reads, in one-letter code: MKNFMTEDFLLTTETAKRLYHEYAADQPIYDYHCHLSPQEIAENRRFTDLGEIWLEGDHYKWRAMRTAGIEERLVTGNASFKEKYQAWAKTVPQCIGNPIYHWTHLELRRPFGITDVLFSPKTADAIWDQCNEMLQQPEFSARGIMQQMKVKMVGTTDDPADSLEHHKFIANDNSFDIAVTPSWRPDRAFKVDHVGFKDYLNKLGKAADINITRFSDLIAALAQRLEVFDAHGCRSADHGIEIMRFANEPSETDLDAILTKRINEQALTELEIAQFSSAVQAWLGKQYAKKGWVMQLHIGARRNNSSRMFKLIGGDSGFDSMDDRAFAEPLSGFLNTLDQSDELPKTILYCLNPMHNEMLATMAGNFQGGGVAGKVQFGSGWWFNDQLDGMQRQLTSVAQMGLLSQFVGMLTDSRSFLSYTRHEYFRRLLCEMIGGWVERGEAPADMALLGEMVKGICAGNAKKYFGF.

It belongs to the metallo-dependent hydrolases superfamily. Uronate isomerase family.

It catalyses the reaction D-glucuronate = D-fructuronate. The enzyme catalyses aldehydo-D-galacturonate = keto-D-tagaturonate. The protein operates within carbohydrate metabolism; pentose and glucuronate interconversion. This chain is Uronate isomerase, found in Marinomonas sp. (strain MWYL1).